Reading from the N-terminus, the 295-residue chain is Protoheme IX farnesyltransferase 2 (295 aa).

Transmembrane regions (helical) follow at residues 9 to 29, 36 to 56, 83 to 103, 108 to 128, 135 to 155, 163 to 183, 209 to 229, 230 to 250, and 264 to 284; these read ITKP…FFLA, FALF…GCVF, LTLA…LLYV, LSAF…SLWL, GTLV…CAVS, VTLL…IAIF, IVLY…GGYA, GLGY…MAWG, and VFGF…VDSQ.

Belongs to the UbiA prenyltransferase family. Protoheme IX farnesyltransferase subfamily.

The protein localises to the cell inner membrane. The enzyme catalyses heme b + (2E,6E)-farnesyl diphosphate + H2O = Fe(II)-heme o + diphosphate. It participates in porphyrin-containing compound metabolism; heme O biosynthesis; heme O from protoheme: step 1/1. Its function is as follows. Converts heme B (protoheme IX) to heme O by substitution of the vinyl group on carbon 2 of heme B porphyrin ring with a hydroxyethyl farnesyl side group. The polypeptide is Protoheme IX farnesyltransferase 2 (Pseudomonas putida (strain W619)).